The chain runs to 438 residues: MGRDRISELPDGLLNHILMYLHIEESIRTSVLSSRWRKLWLKVPGLDVNVHDFPADGNLFESLMDKFLEVNRGRLQNFKLNYESNLYYLMDRFVPWIATVVDRGIQHLDVTATDCPPWTIDFMPANICKSKTLVSLKLVNVGLDTPKFVVSLPCLKIMHLEDIFYSPLIAENLISGCPVLEDLTIVRNHEDFLNFLRVMSQTLKNFRLTFDWGMGSNDFSVEIDAPGLKYMSFRDSQSDRIVVKNLSSLVKIDLDTEFNLKFGLGSPLEPEDLTKRDIIRDFLTGISSVKHMIISHPTLEVLYRYSKIGQLPKFHNLYHLQAVFSSSLLQLLPAFLEICPNLKNLILDYSISAEPEQIDFTNLPRCLISTLEYVEIKQLTMREESGIKLVKYFLENSAVLKKLTLSFIDSPMTNQESEIYMQLLTSTKRSRGCHVLIL.

Residues 3 to 49 (RDRISELPDGLLNHILMYLHIEESIRTSVLSSRWRKLWLKVPGLDVN) form the F-box domain. LRR repeat units lie at residues 246–275 (LSSL…DLTK) and 286–310 (ISSV…KIGQ). Residues 355–407 (PEQIDFTNLPRCLISTLEYVEIKQLTMREESGIKLVKYFLENSAVLKKLTLSF) form the FBD domain.

In Arabidopsis thaliana (Mouse-ear cress), this protein is Putative F-box/FBD/LRR-repeat protein At5g44950.